The primary structure comprises 449 residues: Aspartyl protease AED3 (449 aa).

An N-terminal signal peptide occupies residues 1–23; the sequence is MASSSLHFFFFLTLLLPFTFTTA. Residues 104–444 form the Peptidase A1 domain; it reads YVVRAKLGTP…DVPNSRIGIA (341 aa). Asp-122 is an active-site residue. Cys-132 and Cys-138 are joined by a disulfide. N-linked (GlcNAc...) asparagine glycosylation is found at Asn-140, Asn-148, Asn-184, Asn-211, and Asn-297. Residue Asp-328 is part of the active site. Asn-353 carries N-linked (GlcNAc...) asparagine glycosylation. Cys-366 and Cys-405 are oxidised to a cystine.

The protein belongs to the peptidase A1 family.

The protein localises to the secreted. It localises to the extracellular space. It is found in the apoplast. In Arabidopsis thaliana (Mouse-ear cress), this protein is Aspartyl protease AED3.